Consider the following 748-residue polypeptide: Catalase-peroxidase (748 aa).

The segment at residues 91-242 (WHSAGTYRIG…LAAVQMGLIY (152 aa)) is a cross-link (tryptophyl-tyrosyl-methioninium (Trp-Tyr) (with M-268)). H92 acts as the Proton acceptor in catalysis. Residues 194–223 (DRYGKGKGSSSQGEIPADAHRHGQEQARTA) form a disordered region. A cross-link (tryptophyl-tyrosyl-methioninium (Tyr-Met) (with W-91)) is located at residues 242 to 268 (YVNPEGPEGNPDPLAAAHDIRETFARM). H283 is a binding site for heme b. Positions 288–310 (THGAGDAKHVGREPEGEDMDSQG) are disordered. A compositionally biased stretch (basic and acidic residues) spans 290–301 (GAGDAKHVGREP).

This sequence belongs to the peroxidase family. Peroxidase/catalase subfamily. As to quaternary structure, homodimer or homotetramer. The cofactor is heme b. In terms of processing, formation of the three residue Trp-Tyr-Met cross-link is important for the catalase, but not the peroxidase activity of the enzyme.

The enzyme catalyses H2O2 + AH2 = A + 2 H2O. It catalyses the reaction 2 H2O2 = O2 + 2 H2O. In terms of biological role, bifunctional enzyme with both catalase and broad-spectrum peroxidase activity. The polypeptide is Catalase-peroxidase (Herbaspirillum seropedicae).